The following is a 650-amino-acid chain: MLRKSVLELSSRLSIKRFPRNLGAQRFHLSSSRNASTSGKNGLPGAKPVGKPDASKVDPPKVTPPPPTKGNSSKVVIGGVAIAGAFLVAYQTGYLDQYLGKEQQKLSERIHSDALTEKLEEAHHLNVPSGVEDSTEKDGKVETQPQVTHSEASEGVQSDIELQPESDLSSDRFTYISSNQEETPQETVIDRAEINLPISASEDSGAKPDMPSEIISEAESVKLEAVPKPGDSPIIVNAQSSSVHRESETESASPKDPAALKTPEDGIEREVQLPGSLLKEYNLEGSDTESTGSSSIGEQITKETEAFPNSTEGLKDSYMTEDGKLVLDFLAAIHAAEKQQAHLDAQVFAEELRALKEKYENELRDLRARELMRIEEAAILDKELKRERTKAAAAIKAIQERMEDKLKAELEQKETEAQLALSKAEELAKAEMISTIAKEKAAQIEKMAEADLNIKALSMAFYARSEEARQSHSVHKLALGALALDDTLSKGLPVQKEIDTLQTYLEGTHKDSILGLVLSSLPEEARSNGTDTVLQLNQKFDTLKGTLRHFSLIPPGGGGILAHSLAHVASSLKFKEVDQANGGIESVIKKVDNYLAEGKLAEAAATLEEGVKGSKAEEIVSDWVRRARNRAITEQALTLLQSYATCVSLT.

The transit peptide at 1 to 34 directs the protein to the mitochondrion; the sequence is MLRKSVLELSSRLSIKRFPRNLGAQRFHLSSSRN. Residues 26–74 are disordered; the sequence is RFHLSSSRNASTSGKNGLPGAKPVGKPDASKVDPPKVTPPPPTKGNSSK. A compositionally biased stretch (polar residues) spans 28–40; the sequence is HLSSSRNASTSGK. Over 35–74 the chain is Mitochondrial matrix; that stretch reads ASTSGKNGLPGAKPVGKPDASKVDPPKVTPPPPTKGNSSK. The chain crosses the membrane as a helical span at residues 75–95; it reads VVIGGVAIAGAFLVAYQTGYL. The Mitochondrial intermembrane segment spans residues 96–549; the sequence is DQYLGKEQQK…FDTLKGTLRH (454 aa). Disordered stretches follow at residues 121 to 168, 239 to 267, and 284 to 304; these read EAHH…ESDL, QSSS…EDGI, and EGSD…TKET. Low complexity predominate over residues 284-299; the sequence is EGSDTESTGSSSIGEQ. Coiled-coil stretches lie at residues 345–369 and 396–430; these read AQVF…LRAR and KAIQ…LAKA. The chain crosses the membrane as a helical span at residues 550–570; the sequence is FSLIPPGGGGILAHSLAHVAS. At 571-650 the chain is on the mitochondrial matrix side; the sequence is SLKFKEVDQA…QSYATCVSLT (80 aa).

This sequence belongs to the MICOS complex subunit Mic60 family. In terms of assembly, component of the mitochondrial contact site and cristae organizing system (MICOS) complex. The MICOS complex associates with mitochondrial outer membrane proteins. Present in a large lipid-enriched complex called mitochondrial transmembrane lipoprotein (MTL) complex made of proteins located in the two mitochondrial membranes, including the TOM complex and the core components of the MICOS complex and containing at least digalactosyldiacylglycerol (DGDG). Binds to TOM40-1. Component of a mitochondrial large protein complex that contains, at least, MIC60, DGS1, TOM40, TOM20 proteins, and petC/RISP.

It localises to the mitochondrion inner membrane. Functionally, component of the MICOS complex, a large protein complex of the mitochondrial inner membrane that plays crucial roles in the maintenance of crista junctions, inner membrane architecture, and formation of contact sites to the outer membrane. Plays a role in keeping cristae membranes connected to the inner boundary membrane. Also promotes protein import via the mitochondrial intermembrane space assembly (MIA) pathway. Involved in the maintenance of mitochondria morphology. Binds to glycerolipids such as cardiolipin (CL). Contributes to the export of phosphatidylethanolamine (PE) from mitochondria and to the import of galactoglycerolipids from plastids during phosphate (Pi) starvation. Promotes lipid desorption from membranes, likely as an initial step for lipid transfer, and regulates probably the tethering between the inner and outer membranes of mitochondria by binding to TOM40 proteins. The sequence is that of MICOS complex subunit MIC60, mitochondrial from Arabidopsis thaliana (Mouse-ear cress).